Reading from the N-terminus, the 217-residue chain is Ribonuclease HII (217 aa).

The RNase H type-2 domain maps to 12 to 201 (DLVAGVDEVG…VRTAHEARAA (190 aa)). Aspartate 18, glutamate 19, and aspartate 110 together coordinate a divalent metal cation.

The protein belongs to the RNase HII family. Mn(2+) serves as cofactor. It depends on Mg(2+) as a cofactor.

It is found in the cytoplasm. It carries out the reaction Endonucleolytic cleavage to 5'-phosphomonoester.. Its function is as follows. Endonuclease that specifically degrades the RNA of RNA-DNA hybrids. In Pseudomonas syringae pv. tomato (strain ATCC BAA-871 / DC3000), this protein is Ribonuclease HII.